We begin with the raw amino-acid sequence, 269 residues long: Thymidylate synthase (269 aa).

DUMP contacts are provided by residues Arg21 and 125–126 (RR). Cys145 (nucleophile) is an active-site residue. DUMP contacts are provided by residues 171–174 (RSGD), Asn182, and 212–214 (HVY). Residue Asp174 coordinates (6R)-5,10-methylene-5,6,7,8-tetrahydrofolate. Position 268 (Ala268) interacts with (6R)-5,10-methylene-5,6,7,8-tetrahydrofolate.

Belongs to the thymidylate synthase family. Bacterial-type ThyA subfamily. Homodimer.

The protein localises to the cytoplasm. The catalysed reaction is dUMP + (6R)-5,10-methylene-5,6,7,8-tetrahydrofolate = 7,8-dihydrofolate + dTMP. It functions in the pathway pyrimidine metabolism; dTTP biosynthesis. Catalyzes the reductive methylation of 2'-deoxyuridine-5'-monophosphate (dUMP) to 2'-deoxythymidine-5'-monophosphate (dTMP) while utilizing 5,10-methylenetetrahydrofolate (mTHF) as the methyl donor and reductant in the reaction, yielding dihydrofolate (DHF) as a by-product. This enzymatic reaction provides an intracellular de novo source of dTMP, an essential precursor for DNA biosynthesis. The sequence is that of Thymidylate synthase from Cutibacterium acnes (strain DSM 16379 / KPA171202) (Propionibacterium acnes).